The sequence spans 203 residues: Cilia- and flagella-associated protein 20 (203 aa).

Belongs to the CFAP20 family.

It is found in the nucleus. The protein localises to the cytoplasm. Its subcellular location is the cytoskeleton. The protein resides in the microtubule organizing center. It localises to the centrosome. It is found in the centriole. The protein localises to the cilium basal body. Its subcellular location is the cilium axoneme. Cilium- and flagellum-specific protein that plays a role in axonemal structure organization and motility. Microtubule inner protein (MIP) part of the dynein-decorated doublet microtubules (DMTs) in cilia axoneme, which is required for motile cilia beating. Involved in the regulation of the size and morphology of cilia. Required for axonemal microtubules polyglutamylation. The chain is Cilia- and flagella-associated protein 20 from Caenorhabditis briggsae.